The primary structure comprises 285 residues: MAATQELSKGGVEEAVEEDDPAALKPGAAPFGNFPHYSRFHPPEQRLRLLPPELLRQLFPPEGPERRPILGLDVGCNSGDLSMALYKHFLSPHDGETSSGTSRELRLLCCDIDPVLVERAENGCRFPDALTFITLDIMDQESRKVPLSSFLSQFGRSVFDIVFCMSVTMWIHLNHGDRGLCEFLAHVSSLCSYLLVEPQPWKCYRAAARRLRKLGLHNFDHFRSLAIRGDMASQIVRILTQDHGMELACCFGNTSWDRSLLLFRAKHTEETQAIPESSTKETGTD.

Positions 1–28 (MAATQELSKGGVEEAVEEDDPAALKPGA) are disordered. Residues R46, N77, D111, 136-137 (DI), and M165 contribute to the S-adenosyl-L-methionine site. Positions 53-275 (ELLRQLFPPE…KHTEETQAIP (223 aa)) constitute a Bin3-type SAM domain.

The protein belongs to the methyltransferase superfamily. In terms of assembly, interacts with DICER1; the interaction may be mediated by RNA.

It is found in the cytoplasm. It catalyses the reaction a 5'-end 5'-phospho-ribonucleoside-RNA + S-adenosyl-L-methionine = a 5'-end (5'-methylphospho)-ribonucleoside-RNA + S-adenosyl-L-homocysteine. The enzyme catalyses a 5'-end 5'-phospho-ribonucleoside-RNA + 2 S-adenosyl-L-methionine = a 5'-end (5'-bismethylphospho)-ribonucleoside-RNA + 2 S-adenosyl-L-homocysteine. In terms of biological role, O-methyltransferase that specifically monomethylates 5'-monophosphate of cytoplasmic histidyl tRNA (tRNA(His)), acting as a capping enzyme by protecting tRNA(His) from cleavage by DICER1. Also able, with less efficiently, to methylate the 5' monophosphate of a subset of pre-miRNAs, acting as a negative regulator of miRNA processing. The 5' monophosphate of pre-miRNAs is recognized by DICER1 and is required for pre-miRNAs processing: methylation at this position reduces the processing of pre-miRNAs by DICER1. Was also reported to mediate dimethylation of pre-miR-145; however dimethylation cannot be reproduced by another group which observes a monomethylation of pre-miR-145. This chain is RNA 5'-monophosphate methyltransferase, found in Rattus norvegicus (Rat).